The chain runs to 261 residues: 1-(5-phosphoribosyl)-5-[(5-phosphoribosylamino)methylideneamino] imidazole-4-carboxamide isomerase (261 aa).

Asp8 acts as the Proton acceptor in catalysis. Residue Asp139 is the Proton donor of the active site.

This sequence belongs to the HisA/HisF family.

It localises to the cytoplasm. It catalyses the reaction 1-(5-phospho-beta-D-ribosyl)-5-[(5-phospho-beta-D-ribosylamino)methylideneamino]imidazole-4-carboxamide = 5-[(5-phospho-1-deoxy-D-ribulos-1-ylimino)methylamino]-1-(5-phospho-beta-D-ribosyl)imidazole-4-carboxamide. The protein operates within amino-acid biosynthesis; L-histidine biosynthesis; L-histidine from 5-phospho-alpha-D-ribose 1-diphosphate: step 4/9. This chain is 1-(5-phosphoribosyl)-5-[(5-phosphoribosylamino)methylideneamino] imidazole-4-carboxamide isomerase, found in Janthinobacterium sp. (strain Marseille) (Minibacterium massiliensis).